The following is a 91-amino-acid chain: Small ribosomal subunit protein uS19 (91 aa).

This sequence belongs to the universal ribosomal protein uS19 family.

In terms of biological role, protein S19 forms a complex with S13 that binds strongly to the 16S ribosomal RNA. This Fusobacterium nucleatum subsp. nucleatum (strain ATCC 25586 / DSM 15643 / BCRC 10681 / CIP 101130 / JCM 8532 / KCTC 2640 / LMG 13131 / VPI 4355) protein is Small ribosomal subunit protein uS19.